The sequence spans 319 residues: MSLNFLEFEKPIAELEAKVEALREISRRGGENALDLEKEIKQLEDKCLELKKKTFSDLGAWEVAQLARHPERPYVLDYIEHMFTEFDELAGDRAFADDKALVGGIARLDGRPVMVIGHQKGRGTKEKVIRNFGMPKPEGYRKAKRLMQMAERFNMPVITFIDTAGAYPGVGAEERGQSEAIAMNLKIMSELSVPVICNVVGEGGSGGALAIGVGDYVNMLQYSTYSVISPEGCASILWRDSDKAPQAAEAMGLVAPRLKELELIDTIIDEPLGGAHRDHKATAENIKQRLLEQLKELDAFDNEALLERRYQRLMSYGYC.

In terms of domain architecture, CoA carboxyltransferase C-terminal spans 35–296 (DLEKEIKQLE…KQRLLEQLKE (262 aa)).

The protein belongs to the AccA family. Acetyl-CoA carboxylase is a heterohexamer composed of biotin carboxyl carrier protein (AccB), biotin carboxylase (AccC) and two subunits each of ACCase subunit alpha (AccA) and ACCase subunit beta (AccD).

It is found in the cytoplasm. The catalysed reaction is N(6)-carboxybiotinyl-L-lysyl-[protein] + acetyl-CoA = N(6)-biotinyl-L-lysyl-[protein] + malonyl-CoA. It functions in the pathway lipid metabolism; malonyl-CoA biosynthesis; malonyl-CoA from acetyl-CoA: step 1/1. Its function is as follows. Component of the acetyl coenzyme A carboxylase (ACC) complex. First, biotin carboxylase catalyzes the carboxylation of biotin on its carrier protein (BCCP) and then the CO(2) group is transferred by the carboxyltransferase to acetyl-CoA to form malonyl-CoA. In Aliivibrio fischeri (strain ATCC 700601 / ES114) (Vibrio fischeri), this protein is Acetyl-coenzyme A carboxylase carboxyl transferase subunit alpha.